Here is a 740-residue protein sequence, read N- to C-terminus: MRKLVEATQAGSEASVALAPSAPIQRLQAGLHHDPFEVLGVHVQPDGSKLVRAFLPAAEAVEVAGVRMTRVPGTDCFERLLPPGTALEAHPLLTWQDKRSGAWQRLRSPYSFAPQLGEMDLYLFGEGRHFEIWKVLGARVKTVDGVTGCLFAVWAPAVLRVSVVGDFNDWDGRRHPMRCRGVSGVWELFIPGLEAGHAYKYEILGRHGERVTKTDPYARQMFLRPETTSRVPDERPYAWGDAEWLAARTRFDWQHRPMSVYEVHPGSWRRRADGSFYSWRELTAELIPYVRDLGYTHIELLPVAEHPFDASWGYQVSGYYAATARFGSPDDLRAFVDACHQAGLGVLLDWVPGHFPKDDFALARFTGEPLYEHADPRRGEHQDWGTLVFDFGRNEVRNFLVANALYWLEEFHIDGLRVDAVASMLYLDYSRRHGEWLPNQHGGRENLEAIHFLHEVNAEVHARFPGAITIAEESTAWPAVSRPIELGGLGFSMKWNMGWMNDTLDYIEKEPVYRKYQHNQLTFSQMYAWSENFVLPLSHDEVVHLKKSLLDKMPGDRWQRFANLRLLYAWQYAHPGKKLLFMGGEFGQWNEWREAGQLDWVLLGFPEHDGIRALLRDLNRLYRDEAALHFWDFDPRGFRWIDCHDADQSVLSLVREGPDGAPPIVVLLNFTPVPRHGYRIGVPRAGAWCEVLNSDSMYYGGSNLGNGKPLYPAAVPWMGFGQSIEVTLPPLGAIFLKPCP.

Asp419 functions as the Nucleophile in the catalytic mechanism. The Proton donor role is filled by Glu472.

The protein belongs to the glycosyl hydrolase 13 family. GlgB subfamily. Monomer.

It catalyses the reaction Transfers a segment of a (1-&gt;4)-alpha-D-glucan chain to a primary hydroxy group in a similar glucan chain.. It participates in glycan biosynthesis; glycogen biosynthesis. Catalyzes the formation of the alpha-1,6-glucosidic linkages in glycogen by scission of a 1,4-alpha-linked oligosaccharide from growing alpha-1,4-glucan chains and the subsequent attachment of the oligosaccharide to the alpha-1,6 position. The sequence is that of 1,4-alpha-glucan branching enzyme GlgB from Thiobacillus denitrificans (strain ATCC 25259 / T1).